Here is a 490-residue protein sequence, read N- to C-terminus: C-type lectin domain family 14 member A (490 aa).

The signal sequence occupies residues 1 to 21 (MRPAFALCLLWQALWPGPGGG). The Extracellular segment spans residues 22-397 (EHPTADRAGC…TPQAFDSSSA (376 aa)). The region spanning 33–173 (ASGACYSLHH…LRANGYLCKY (141 aa)) is the C-type lectin domain. The cysteines at positions 143 and 162 are disulfide-linked. N-linked (GlcNAc...) asparagine glycosylation occurs at Asn189. Residues 245–287 (PCPGRYLRAGKCAELPNCLDDLGGFACECATGFELGKDGRSCV) enclose the EGF-like domain. The segment at 286–349 (CVTSGEGQPT…VTSIPEIPRW (64 aa)) is disordered. The segment covering 301–315 (VPTRRPPATATSPVP) has biased composition (low complexity). Asn381 carries an N-linked (GlcNAc...) asparagine glycan. The helical transmembrane segment at 398–418 (VVFIFVSTAVVVLVILTMTVL) threads the bilayer. Topologically, residues 419–490 (GLVKLCFHES…AESPLGSSDA (72 aa)) are cytoplasmic. The interval 428-461 (SPSSQPRKESMGPPGLESDPEPAALGSSSAHCTN) is disordered.

Its subcellular location is the membrane. The sequence is that of C-type lectin domain family 14 member A (CLEC14A) from Homo sapiens (Human).